Here is a 486-residue protein sequence, read N- to C-terminus: Serralysin (486 aa).

H187 contributes to the Zn(2+) binding site. The active site involves E188. H191 and H197 together coordinate Zn(2+). 8 residues coordinate Ca(2+): R266, D269, D298, G300, G301, D303, T340, and E342. Hemolysin-type calcium-binding repeat units lie at residues 345 to 362 (IGGS…ANTL) and 363 to 380 (KGGA…ADNL).

This sequence belongs to the peptidase M10B family. Zn(2+) serves as cofactor. Requires Ca(2+) as cofactor.

It localises to the secreted. It carries out the reaction Preferential cleavage of bonds with hydrophobic residues in P1'.. This chain is Serralysin (prtA1), found in Photorhabdus luminescens (Xenorhabdus luminescens).